Here is a 177-residue protein sequence, read N- to C-terminus: Adenine phosphoribosyltransferase (177 aa).

This sequence belongs to the purine/pyrimidine phosphoribosyltransferase family. Homodimer.

It localises to the cytoplasm. It carries out the reaction AMP + diphosphate = 5-phospho-alpha-D-ribose 1-diphosphate + adenine. Its pathway is purine metabolism; AMP biosynthesis via salvage pathway; AMP from adenine: step 1/1. Its function is as follows. Catalyzes a salvage reaction resulting in the formation of AMP, that is energically less costly than de novo synthesis. The protein is Adenine phosphoribosyltransferase of Chlorobium phaeovibrioides (strain DSM 265 / 1930) (Prosthecochloris vibrioformis (strain DSM 265)).